Reading from the N-terminus, the 308-residue chain is Ribosomal protein L11 methyltransferase (308 aa).

Residues threonine 157, glycine 178, aspartate 200, and asparagine 243 each coordinate S-adenosyl-L-methionine.

It belongs to the methyltransferase superfamily. PrmA family.

It localises to the cytoplasm. It carries out the reaction L-lysyl-[protein] + 3 S-adenosyl-L-methionine = N(6),N(6),N(6)-trimethyl-L-lysyl-[protein] + 3 S-adenosyl-L-homocysteine + 3 H(+). Functionally, methylates ribosomal protein L11. This is Ribosomal protein L11 methyltransferase from Pelotomaculum thermopropionicum (strain DSM 13744 / JCM 10971 / SI).